A 339-amino-acid polypeptide reads, in one-letter code: Major pollen allergen Lol p 5b (339 aa).

Positions 1–25 (MAVQKHTVALFLAVALVAGPAASYA) are cleaved as a signal peptide. Repeat copies occupy residues 32–34 (PAT), 35–37 (PAT), 38–40 (PAA), 41–43 (PAT), 44–46 (AAT), 47–49 (PAT), 50–52 (PAT), 53–55 (PAT), and 56–58 (PAA). A 9 X 3 AA tandem repeats of [PA]-A-[TA] region spans residues 32–58 (PATPATPAAPATAATPATPATPATPAA). The span at 36–58 (ATPAAPATAATPATPATPATPAA) shows a compositional bias: low complexity. The tract at residues 36-65 (ATPAAPATAATPATPATPATPAAVPSGKAT) is disordered. The 2-1; truncated repeat unit spans residues 285-290 (ATPAAA). The tract at residues 285 to 334 (ATPAAAATATPTPAAATATATPAAAYATATPAAATATATPAAATATPAAA) is 6 X 9 AA approximate tandem repeats of T-A-T-A-T-P-A-A-A. A run of 4 repeats spans residues 292–300 (TATPTPAAA), 301–309 (TATATPAAA), 310–318 (YATATPAAA), and 319–327 (TATATPAAA). The 2-6; truncated repeat unit spans residues 328–334 (TATPAAA).

The protein belongs to the Poa p IX/Phl p VI allergen family. As to expression, pollen, starch granules.

The sequence is that of Major pollen allergen Lol p 5b from Lolium perenne (Perennial ryegrass).